A 306-amino-acid polypeptide reads, in one-letter code: Ribonuclease Z (306 aa).

Zn(2+) is bound by residues His-63, His-65, Asp-67, His-68, His-141, Asp-211, and His-269. Asp-67 serves as the catalytic Proton acceptor.

This sequence belongs to the RNase Z family. As to quaternary structure, homodimer. It depends on Zn(2+) as a cofactor.

It catalyses the reaction Endonucleolytic cleavage of RNA, removing extra 3' nucleotides from tRNA precursor, generating 3' termini of tRNAs. A 3'-hydroxy group is left at the tRNA terminus and a 5'-phosphoryl group is left at the trailer molecule.. Zinc phosphodiesterase, which displays some tRNA 3'-processing endonuclease activity. Probably involved in tRNA maturation, by removing a 3'-trailer from precursor tRNA. The protein is Ribonuclease Z of Staphylococcus epidermidis (strain ATCC 35984 / DSM 28319 / BCRC 17069 / CCUG 31568 / BM 3577 / RP62A).